A 113-amino-acid polypeptide reads, in one-letter code: Putative membrane protein insertion efficiency factor (113 aa).

Belongs to the UPF0161 family.

The protein localises to the cell inner membrane. Its function is as follows. Could be involved in insertion of integral membrane proteins into the membrane. This is Putative membrane protein insertion efficiency factor from Campylobacter curvus (strain 525.92).